A 313-amino-acid polypeptide reads, in one-letter code: Olfactory receptor 1J1 (313 aa).

Residues 1–25 (MRLKNHSSVSEFLLLGFPIRPEQGG) are Extracellular-facing. Residue Asn5 is glycosylated (N-linked (GlcNAc...) asparagine). The chain crosses the membrane as a helical span at residues 26-46 (IFFSLFLAMYLITVLGNLLII). Residues 47–57 (LLIRLDSHLHT) lie on the Cytoplasmic side of the membrane. The helical transmembrane segment at 58-78 (PMYFFLSHLAFTDISFSSVTV) threads the bilayer. The Extracellular segment spans residues 79 to 97 (PKMLTKVQNQPIPITYEEC). A disulfide bond links Cys97 and Cys189. Residues 98-118 (VSQTYFFIFFADLDSFLITSM) traverse the membrane as a helical segment. Residues 119 to 142 (AYDRYMAICHPLHYITIMSQSRCA) are Cytoplasmic-facing. A helical transmembrane segment spans residues 143–163 (MLVAVSWVIASACALLHSLLL). Residues 164-196 (DQLSFCADHTVPHFFCDLGALLKLSCSDTSLNQ) lie on the Extracellular side of the membrane. A helical membrane pass occupies residues 197-217 (LVIFTAGLAAIMLPFLCILIS). The Cytoplasmic segment spans residues 218-240 (YGRIGFTILQVPTTKGICKALST). A helical transmembrane segment spans residues 241–261 (CGSHLSVVALYYGSIIGLYFL). The Extracellular portion of the chain corresponds to 262–271 (PPSNSKINNN). The helical transmembrane segment at 272 to 292 (IVASVMYTVVTPMLNPFIYSL) threads the bilayer. Residues 293–313 (RNKDMKGALKKLLSKKTEFSK) lie on the Cytoplasmic side of the membrane.

Belongs to the G-protein coupled receptor 1 family.

It is found in the cell membrane. Functionally, odorant receptor. In Mus musculus (Mouse), this protein is Olfactory receptor 1J1.